The sequence spans 450 residues: Divalent metal cation transporter MntH (450 aa).

The next 11 membrane-spanning stretches (helical) occupy residues 34-54, 59-81, 108-128, 141-161, 170-190, 212-232, 263-283, 305-325, 361-381, 383-403, and 422-442; these read LSFLGPGLLVAGGYMDSGNWI, GGAQYGYTLLFGNLISRLSAMLL, IAIIFWIIAELAIIATDIAEV, IPLIVGALITVLDVFLLLFIM, AIVGTLIFTVLFIFIFEVYIS, GILYIALGIIGATIMPHNLYL, IQLSIAFVVNCLLLVLGASLF, PVLGATMGAIMSTLFAVALLA, SLAVIPVIVCLIIFKGNAAKI, QLLVFSQVFLSIALPFCLIPL, and VNIISWTLIIILSILNVYLIV.

The protein belongs to the NRAMP family.

The protein resides in the cell membrane. H(+)-stimulated, divalent metal cation uptake system. The chain is Divalent metal cation transporter MntH from Staphylococcus aureus (strain MRSA252).